Consider the following 406-residue polypeptide: MARVFLFVLDSFGIGGAPDAEAFGDLGADTLGHIAEFCASGAGDRAGLREGPLQLPNMSALGLVHAAKLATGRLPAGMPLPERVYGVYGAASEVSRGKDTPSGHWEIAGTPVRFDWGYFPAEGDAFPPQLVEAICREGEVPGILGNCHASGTDIIARHGEEHMRSGKPICYTSSDSVFQIAAHERTFGLERLLELCQVVRRLVDDYNIGRVIARPFVGDNPGNFTRTGHRRDFSVLPPEPTILDRLEAAGRTVHAIGKIGDIFAHRGVTRLTKANGNMELFDASLTVVEEAEEGDLVFTNFVDFDMLYGHRRDVPGYAAALEAFDARLPDLDRRLRPGDMVILTADHGCDPTWRGTDHTRERVPVLMFGPSLRSRSFGIANSFAHIGETAARHLGIAPGPHGRSLL.

Mn(2+) contacts are provided by D10, D305, H310, D346, H347, and H358.

This sequence belongs to the phosphopentomutase family. Mn(2+) serves as cofactor.

It is found in the cytoplasm. It carries out the reaction 2-deoxy-alpha-D-ribose 1-phosphate = 2-deoxy-D-ribose 5-phosphate. The catalysed reaction is alpha-D-ribose 1-phosphate = D-ribose 5-phosphate. It participates in carbohydrate degradation; 2-deoxy-D-ribose 1-phosphate degradation; D-glyceraldehyde 3-phosphate and acetaldehyde from 2-deoxy-alpha-D-ribose 1-phosphate: step 1/2. Isomerase that catalyzes the conversion of deoxy-ribose 1-phosphate (dRib-1-P) and ribose 1-phosphate (Rib-1-P) to deoxy-ribose 5-phosphate (dRib-5-P) and ribose 5-phosphate (Rib-5-P), respectively. The protein is Phosphopentomutase of Sinorhizobium fredii (strain NBRC 101917 / NGR234).